The sequence spans 289 residues: Thiazole synthase (289 aa).

The Schiff-base intermediate with DXP role is filled by lysine 132. 1-deoxy-D-xylulose 5-phosphate contacts are provided by residues glycine 193, 219 to 220 (AG), and 241 to 242 (NT).

The protein belongs to the ThiG family. Homotetramer. Forms heterodimers with either ThiH or ThiS.

The protein localises to the cytoplasm. The catalysed reaction is [ThiS sulfur-carrier protein]-C-terminal-Gly-aminoethanethioate + 2-iminoacetate + 1-deoxy-D-xylulose 5-phosphate = [ThiS sulfur-carrier protein]-C-terminal Gly-Gly + 2-[(2R,5Z)-2-carboxy-4-methylthiazol-5(2H)-ylidene]ethyl phosphate + 2 H2O + H(+). The protein operates within cofactor biosynthesis; thiamine diphosphate biosynthesis. In terms of biological role, catalyzes the rearrangement of 1-deoxy-D-xylulose 5-phosphate (DXP) to produce the thiazole phosphate moiety of thiamine. Sulfur is provided by the thiocarboxylate moiety of the carrier protein ThiS. In vitro, sulfur can be provided by H(2)S. The polypeptide is Thiazole synthase (Rhodospirillum rubrum (strain ATCC 11170 / ATH 1.1.1 / DSM 467 / LMG 4362 / NCIMB 8255 / S1)).